The chain runs to 165 residues: Small ribosomal subunit protein uS5 (165 aa).

The 64-residue stretch at 10 to 73 folds into the S5 DRBM domain; that stretch reads QIEKLISLNR…TSARKNLRFV (64 aa).

This sequence belongs to the universal ribosomal protein uS5 family. Part of the 30S ribosomal subunit. Contacts proteins S4 and S8.

In terms of biological role, with S4 and S12 plays an important role in translational accuracy. Functionally, located at the back of the 30S subunit body where it stabilizes the conformation of the head with respect to the body. This chain is Small ribosomal subunit protein uS5, found in Borreliella burgdorferi (strain ATCC 35210 / DSM 4680 / CIP 102532 / B31) (Borrelia burgdorferi).